Reading from the N-terminus, the 687-residue chain is DNA-directed RNA polymerase subunit beta' (687 aa).

The Zn(2+) site is built by C69, C71, C87, and C90. 3 residues coordinate Mg(2+): D495, D497, and D499.

The protein belongs to the RNA polymerase beta' chain family. RpoC1 subfamily. In terms of assembly, in plastids the minimal PEP RNA polymerase catalytic core is composed of four subunits: alpha, beta, beta', and beta''. When a (nuclear-encoded) sigma factor is associated with the core the holoenzyme is formed, which can initiate transcription. Mg(2+) is required as a cofactor. Requires Zn(2+) as cofactor.

It localises to the plastid. Its subcellular location is the chloroplast. It catalyses the reaction RNA(n) + a ribonucleoside 5'-triphosphate = RNA(n+1) + diphosphate. DNA-dependent RNA polymerase catalyzes the transcription of DNA into RNA using the four ribonucleoside triphosphates as substrates. The sequence is that of DNA-directed RNA polymerase subunit beta' from Solanum tuberosum (Potato).